The chain runs to 146 residues: Acidic phospholipase A2 S14-72F (146 aa).

A signal peptide spans 1–19; the sequence is MYPAHLLVLLAVCVSLLGA. The propeptide occupies 20–27; it reads ASIPPQPL. Cystine bridges form between C38/C98, C54/C145, C56/C72, C71/C126, C78/C119, C87/C112, and C105/C117. Ca(2+) contacts are provided by Y55, G57, and G59. H75 is an active-site residue. D76 provides a ligand contact to Ca(2+). Residue D120 is part of the active site.

The protein belongs to the phospholipase A2 family. Group I subfamily. D49 sub-subfamily. The cofactor is Ca(2+). Expressed by the venom gland.

The protein localises to the secreted. It carries out the reaction a 1,2-diacyl-sn-glycero-3-phosphocholine + H2O = a 1-acyl-sn-glycero-3-phosphocholine + a fatty acid + H(+). Snake venom phospholipase A2 (PLA2) that inhibits collagen-induced platelet aggregation. PLA2 catalyzes the calcium-dependent hydrolysis of the 2-acyl groups in 3-sn-phosphoglycerides. The chain is Acidic phospholipase A2 S14-72F from Austrelaps superbus (Lowland copperhead snake).